The chain runs to 412 residues: Putative competence-damage inducible protein (412 aa).

This sequence belongs to the CinA family.

This chain is Putative competence-damage inducible protein, found in Bacillus cereus (strain ATCC 14579 / DSM 31 / CCUG 7414 / JCM 2152 / NBRC 15305 / NCIMB 9373 / NCTC 2599 / NRRL B-3711).